The chain runs to 712 residues: Copper amine oxidase 1 (712 aa).

Residue 319-330 (AFDLGEYGAGYL) coordinates substrate. Asp321 (proton acceptor) is an active-site residue. A disulfide bond links Cys340 and Cys366. 404–409 (AANYEY) contacts substrate. Tyr407 (schiff-base intermediate with substrate; via topaquinone) is an active-site residue. Tyr407 bears the 2',4',5'-topaquinone mark. Positions 458 and 460 each coordinate Cu cation. 2 residues coordinate Mn(2+): Asp616 and Ile617. His627 contacts Cu cation.

It belongs to the copper/topaquinone oxidase family. Homodimer. Requires Cu cation as cofactor. It depends on Zn(2+) as a cofactor. L-topaquinone serves as cofactor. Mn(2+) is required as a cofactor. In terms of processing, topaquinone (TPQ) is generated by copper-dependent autoxidation of a specific tyrosyl residue.

It is found in the cytoplasm. The catalysed reaction is a primary methyl amine + O2 + H2O = an aldehyde + H2O2 + NH4(+). Functionally, copper amine oxidase involved in the metabolism of xenobiotic and biogenic amines. Capable of catalyzing the oxidative deamination of primary amines such as ethylamine as alternate sources of nitrogen to support growth. In Schizosaccharomyces pombe (strain 972 / ATCC 24843) (Fission yeast), this protein is Copper amine oxidase 1 (cao1).